A 297-amino-acid polypeptide reads, in one-letter code: Undecaprenyl-diphosphatase (297 aa).

The next 7 membrane-spanning stretches (helical) occupy residues 58–78 (PGVA…LSYF), 103–123 (AQMG…GLLI), 138–158 (LAAI…AEQL), 168–188 (LRLA…IPGV), 208–228 (AARF…LVEL), 243–263 (VLAI…AWLL), and 274–294 (FVVY…TGTL).

Belongs to the UppP family.

The protein localises to the cell inner membrane. It catalyses the reaction di-trans,octa-cis-undecaprenyl diphosphate + H2O = di-trans,octa-cis-undecaprenyl phosphate + phosphate + H(+). Functionally, catalyzes the dephosphorylation of undecaprenyl diphosphate (UPP). Confers resistance to bacitracin. The polypeptide is Undecaprenyl-diphosphatase (Synechococcus sp. (strain ATCC 27144 / PCC 6301 / SAUG 1402/1) (Anacystis nidulans)).